We begin with the raw amino-acid sequence, 399 residues long: Elongation factor Tu (399 aa).

The tr-type G domain maps to 10-209 (KPHVNIGTIG…AVDEYIPTPE (200 aa)). The G1 stretch occupies residues 19-26 (GHVDHGKT). 19–26 (GHVDHGKT) lines the GTP pocket. Position 26 (threonine 26) interacts with Mg(2+). The G2 stretch occupies residues 60 to 64 (GITIN). Positions 81–84 (DCPG) are G3. GTP is bound by residues 81 to 85 (DCPGH) and 136 to 139 (NKMD). The tract at residues 136 to 139 (NKMD) is G4. The tract at residues 174 to 176 (SAL) is G5.

Belongs to the TRAFAC class translation factor GTPase superfamily. Classic translation factor GTPase family. EF-Tu/EF-1A subfamily. As to quaternary structure, monomer.

It localises to the cytoplasm. It catalyses the reaction GTP + H2O = GDP + phosphate + H(+). In terms of biological role, GTP hydrolase that promotes the GTP-dependent binding of aminoacyl-tRNA to the A-site of ribosomes during protein biosynthesis. The protein is Elongation factor Tu of Nautilia profundicola (strain ATCC BAA-1463 / DSM 18972 / AmH).